We begin with the raw amino-acid sequence, 81 residues long: Gamma-conotoxin-like TeA53 (81 aa).

A signal peptide spans 1-19 (MQKLTILLLVAAVLMSTQA). A propeptide spanning residues 20–42 (LNQEQHQRAKINLLSKRKPPAER) is cleaved from the precursor. 3 disulfides stabilise this stretch: C49/C63, C56/C67, and C62/C72.

This sequence belongs to the conotoxin O2 superfamily. As to expression, expressed by the venom duct.

It is found in the secreted. Its function is as follows. Gamma-conotoxins may act on voltage-gated non-specific cation pacemaker channels (HCN). This Conus textile (Cloth-of-gold cone) protein is Gamma-conotoxin-like TeA53.